The chain runs to 197 residues: Imidazoleglycerol-phosphate dehydratase (197 aa).

Belongs to the imidazoleglycerol-phosphate dehydratase family.

Its subcellular location is the cytoplasm. It catalyses the reaction D-erythro-1-(imidazol-4-yl)glycerol 3-phosphate = 3-(imidazol-4-yl)-2-oxopropyl phosphate + H2O. It participates in amino-acid biosynthesis; L-histidine biosynthesis; L-histidine from 5-phospho-alpha-D-ribose 1-diphosphate: step 6/9. The chain is Imidazoleglycerol-phosphate dehydratase from Azotobacter vinelandii (strain DJ / ATCC BAA-1303).